Here is a 165-residue protein sequence, read N- to C-terminus: Shikimate kinase (165 aa).

An ATP-binding site is contributed by 12–17 (GCGKST). Mg(2+) is bound at residue Ser16. Substrate-binding residues include Asp34, Arg57, and Gly79. ATP is bound at residue Arg116. Arg133 serves as a coordination point for substrate.

It belongs to the shikimate kinase family. As to quaternary structure, monomer. Mg(2+) serves as cofactor.

Its subcellular location is the cytoplasm. It carries out the reaction shikimate + ATP = 3-phosphoshikimate + ADP + H(+). It participates in metabolic intermediate biosynthesis; chorismate biosynthesis; chorismate from D-erythrose 4-phosphate and phosphoenolpyruvate: step 5/7. Functionally, catalyzes the specific phosphorylation of the 3-hydroxyl group of shikimic acid using ATP as a cosubstrate. This chain is Shikimate kinase, found in Clostridium botulinum (strain Eklund 17B / Type B).